A 274-amino-acid chain; its full sequence is Protein A11 homolog (274 aa).

Positions 106–136 (DDNKRVHLLEQEIAELRKKKTKSKNLLDFTN) form a coiled coil.

Belongs to the poxviridae A11 family. As to quaternary structure, homomultimer. Interacts with A32. Post-translationally, phosphorylated by a F10-independent mechanism.

It localises to the host cytoplasm. Functionally, required for viral crescent formation early during virus morphogenesis. This chain is Protein A11 homolog, found in Fowlpox virus (strain NVSL) (FPV).